The primary structure comprises 735 residues: Transmembrane channel-like protein 7 (735 aa).

Residues 1 to 164 (MSEFGAGAEL…QSYFSFLRFL (164 aa)) lie on the Extracellular side of the membrane. Residues 165-185 (VLLNFLMFILMFSFVTLPAVI) form a helical membrane-spanning segment. The Cytoplasmic segment spans residues 186–233 (SNYGIFNSSSTKISPNNTEPYCTVYTPSGNKGLVYFYTYLKDLLTGTG). Residues 234 to 254 (FLEVTVLFYGYYTIDAAWFSV) form a helical membrane-spanning segment. The Extracellular portion of the chain corresponds to 255–258 (LRYN). The chain crosses the membrane as a helical span at residues 259–279 (LPLAYLLTTFAYLALSFVWII). The Cytoplasmic segment spans residues 280 to 355 (KRSVERFRQH…TMKEKLQIYS (76 aa)). The helical transmembrane segment at 356–376 (LRIFINIIVIAVLSGCFYSIY) threads the bilayer. The Extracellular segment spans residues 377–403 (RATVFSQENSSVSIRRNVMIANLLVQY). The N-linked (GlcNAc...) asparagine glycan is linked to Asn385. The chain crosses the membrane as a helical span at residues 404–424 (LPSIVITSANFIAPQIFSFLI). The Cytoplasmic segment spans residues 425 to 436 (RFEDYSAAFEIR). The chain crosses the membrane as a helical span at residues 437-457 (LTLIRCVFVRLANVGVLLFSL). Residues 458 to 488 (WSQIHCDNDQCKACGYDYELYPCWESAVGQE) are Extracellular-facing. The helical transmembrane segment at 489-509 (MYKLLIFDFMIIIAMTLFVDF) threads the bilayer. The Cytoplasmic portion of the chain corresponds to 510-548 (PRKLLVTYCSWKLVQWWGLQEFGISDNVLEIIYGQTICW). The helical transmembrane segment at 549-569 (IGTFFSPLLPAIATIKYFIIF) threads the bilayer. The Extracellular portion of the chain corresponds to 570–594 (YIKKISLIHTRKPASRPIRASSSNF). A helical transmembrane segment spans residues 595–615 (FFLAVLLIGLILAFVPLGVSI). Residues 616-634 (ALISSSKACGPFRNFNTSW) lie on the Cytoplasmic side of the membrane. A helical membrane pass occupies residues 635 to 655 (AIVPYTILEFPIGLQKFLYGI). At 656–658 (ASE) the chain is on the extracellular side. The chain crosses the membrane as a helical span at residues 659 to 679 (AFAVPFFVIACLFMFYFIALA). The Cytoplasmic segment spans residues 680–735 (GAHKRVVEQLREQLVTESRDKLFLLEKLSEAQKNSGKPQKARKLTSSWLLEPLDKG). Residues 710-735 (AQKNSGKPQKARKLTSSWLLEPLDKG) are disordered.

It belongs to the TMC family.

It is found in the membrane. Functionally, probable component of an ion channel. This is Transmembrane channel-like protein 7 (Tmc7) from Gallus gallus (Chicken).